A 265-amino-acid polypeptide reads, in one-letter code: Anamorsin homolog (265 aa).

The interval 1 to 147 (MDAAKMYGAV…WKIGSSFALK (147 aa)) is N-terminal SAM-like domain. The linker stretch occupies residues 147-176 (KKVVKSSPKVQIDFDSDLIDENSLLSEEDL). [2Fe-2S] cluster is bound by residues cysteine 186, cysteine 195, cysteine 198, and cysteine 200. Residues 186 to 200 (CEIGPTRKACKNCSC) form a fe-S binding site A region. Residues cysteine 226, cysteine 229, cysteine 237, and cysteine 240 each coordinate [4Fe-4S] cluster. 2 consecutive short sequence motifs (cx2C motif) follow at residues 226–229 (CGSC) and 237–240 (CSTC). The interval 226–240 (CGSCGLGDAFRCSTC) is fe-S binding site B.

It belongs to the anamorsin family. Monomer. [2Fe-2S] cluster is required as a cofactor. It depends on [4Fe-4S] cluster as a cofactor.

The protein localises to the cytoplasm. It is found in the mitochondrion intermembrane space. In terms of biological role, component of the cytosolic iron-sulfur (Fe-S) protein assembly (CIA) machinery. Required for the maturation of extramitochondrial Fe-S proteins. Part of an electron transfer chain functioning in an early step of cytosolic Fe-S biogenesis, facilitating the de novo assembly of a [4Fe-4S] cluster on the cytosolic Fe-S scaffold complex. Electrons are transferred from NADPH via a FAD- and FMN-containing diflavin oxidoreductase. Together with the diflavin oxidoreductase, also required for the assembly of the diferric tyrosyl radical cofactor of ribonucleotide reductase (RNR), probably by providing electrons for reduction during radical cofactor maturation in the catalytic small subunit. The protein is Anamorsin homolog of Medicago truncatula (Barrel medic).